A 128-amino-acid chain; its full sequence is MHPHDLNLLCCLHFSKPSLPNDLKTLLFRACETSCKLNRRLLDNKPFQGTSKCAKRRRAKRYNRCFDCGAYLYDDHVCKRFTSRSNSDCLSVIHQGPAKLYAEGAYRANSDAEQLIMNDMLLIKSLKL.

The segment at 65 to 94 adopts a C4-type zinc-finger fold; sequence CFDCGAYLYDDHVCKRFTSRSNSDCLSVIH.

Functionally, may act as a regulatory factor during viral transcription. The polypeptide is 14.7 kDa protein (Shallot virus X (ShVX)).